The sequence spans 223 residues: DNA mismatch repair protein MutH (223 aa).

This sequence belongs to the MutH family.

It localises to the cytoplasm. Sequence-specific endonuclease that cleaves unmethylated GATC sequences. It is involved in DNA mismatch repair. This chain is DNA mismatch repair protein MutH, found in Shewanella sp. (strain W3-18-1).